A 439-amino-acid polypeptide reads, in one-letter code: tRNA(Ile)-lysidine synthase (439 aa).

25 to 30 (SGGLDS) is an ATP binding site.

Belongs to the tRNA(Ile)-lysidine synthase family.

The protein resides in the cytoplasm. It carries out the reaction cytidine(34) in tRNA(Ile2) + L-lysine + ATP = lysidine(34) in tRNA(Ile2) + AMP + diphosphate + H(+). In terms of biological role, ligates lysine onto the cytidine present at position 34 of the AUA codon-specific tRNA(Ile) that contains the anticodon CAU, in an ATP-dependent manner. Cytidine is converted to lysidine, thus changing the amino acid specificity of the tRNA from methionine to isoleucine. This Edwardsiella ictaluri (strain 93-146) protein is tRNA(Ile)-lysidine synthase.